We begin with the raw amino-acid sequence, 615 residues long: (+)-alpha-pinene synthase TPS2, chloroplastic (615 aa).

The N-terminal 55 residues, 1–55 (MHCMAVRHFAPSSSLSIFSSTNINNHFFGREIFTPKTSNITTKKSRSRPNCNPIQ), are a transit peptide targeting the chloroplast. (2E)-geranyl diphosphate is bound by residues R330, D367, D371, R509, and D512. Mg(2+)-binding residues include D367 and D371. Positions 367 to 371 (DDIYD) match the DDXXD motif motif. Residues D512, T516, and E520 each coordinate Mg(2+).

It belongs to the terpene synthase family. Tpsb subfamily. It depends on Mg(2+) as a cofactor. Mn(2+) is required as a cofactor. Requires K(+) as cofactor. In terms of tissue distribution, trichome.

It localises to the plastid. The protein resides in the chloroplast. It catalyses the reaction (2E)-geranyl diphosphate = (1R,5R)-alpha-pinene + diphosphate. The catalysed reaction is (2E)-geranyl diphosphate = (1R,5R)-beta-pinene + diphosphate. The enzyme catalyses (2E)-geranyl diphosphate = (4S)-limonene + diphosphate. It carries out the reaction (2E)-geranyl diphosphate = beta-myrcene + diphosphate. Its pathway is secondary metabolite biosynthesis; terpenoid biosynthesis. It participates in terpene metabolism; (-)-alpha-pinene biosynthesis; (-)-alpha-pinene from geranyl diphosphate: step 1/1. In terms of biological role, involved in monoterpene (C10) olefins biosynthesis, constituants of cannabinoids and terpenoids-rich resins. Catalyzes mainly the conversion of (2E)-geranyl diphosphate to (+)-alpha-pinene, and also produces minor products such as (-)-limonene, (+)-beta-pinene and beta-myrcene. The chain is (+)-alpha-pinene synthase TPS2, chloroplastic from Cannabis sativa (Hemp).